The primary structure comprises 699 residues: Tectonic-like complex member Mks1 (699 aa).

Disordered regions lie at residues 101–121 (RRSP…EGEI) and 373–396 (DGFS…IEED). Positions 108–119 (HEGEMEKDKNEG) are enriched in basic and acidic residues. The 127-residue stretch at 434–560 (KRVSLLLELQ…RLQCIRPLGN (127 aa)) folds into the C2 B9-type domain. Residues 632–661 (LELGNDSSDDGDSNDDDVRSSSNPDTSRAT) form a disordered region.

As to quaternary structure, probable component of the tectonic-like complex (also named MKS complex), composed of B9d1, B9d2, Cc2d2a, Mks1 and tctn. In terms of tissue distribution, expressed in chordotonal neurons in the antennae (at protein level). Expressed in spermatids (at protein level).

Its subcellular location is the cytoplasm. It localises to the cytoskeleton. The protein localises to the cilium basal body. It is found in the microtubule organizing center. The protein resides in the centrosome. Its subcellular location is the centriole. Probable component of the tectonic-like complex (also named MKS complex), a complex localized at the transition zone of primary cilia. Required for ciliary structure and function. This Drosophila melanogaster (Fruit fly) protein is Tectonic-like complex member Mks1.